The sequence spans 172 residues: RNA pyrophosphohydrolase (172 aa).

A Nudix hydrolase domain is found at 6-149; that stretch reads GYRLNVGIVI…KRDVYRRAMK (144 aa). The Nudix box signature appears at 38–59; sequence GGIDDGESPEQAMFRELYEEVG.

Belongs to the Nudix hydrolase family. RppH subfamily. A divalent metal cation serves as cofactor.

Functionally, accelerates the degradation of transcripts by removing pyrophosphate from the 5'-end of triphosphorylated RNA, leading to a more labile monophosphorylated state that can stimulate subsequent ribonuclease cleavage. This is RNA pyrophosphohydrolase from Vibrio cholerae serotype O1 (strain ATCC 39315 / El Tor Inaba N16961).